The primary structure comprises 97 residues: Large ribosomal subunit protein bL25 (97 aa).

Belongs to the bacterial ribosomal protein bL25 family. Part of the 50S ribosomal subunit; part of the 5S rRNA/L5/L18/L25 subcomplex. Contacts the 5S rRNA. Binds to the 5S rRNA independently of L5 and L18.

Functionally, this is one of the proteins that binds to the 5S RNA in the ribosome where it forms part of the central protuberance. In Blochmanniella pennsylvanica (strain BPEN), this protein is Large ribosomal subunit protein bL25.